A 305-amino-acid chain; its full sequence is Orotidine 5'-phosphate decarboxylase (305 aa).

The Proton donor role is filled by Lys-108.

The protein belongs to the OMP decarboxylase family. Type 2 subfamily.

The enzyme catalyses orotidine 5'-phosphate + H(+) = UMP + CO2. Its pathway is pyrimidine metabolism; UMP biosynthesis via de novo pathway; UMP from orotate: step 2/2. The chain is Orotidine 5'-phosphate decarboxylase from Caldicellulosiruptor bescii (strain ATCC BAA-1888 / DSM 6725 / KCTC 15123 / Z-1320) (Anaerocellum thermophilum).